Reading from the N-terminus, the 245-residue chain is 1-(5-phosphoribosyl)-5-[(5-phosphoribosylamino)methylideneamino] imidazole-4-carboxamide isomerase (245 aa).

The active-site Proton acceptor is the D8. Catalysis depends on D130, which acts as the Proton donor.

The protein belongs to the HisA/HisF family.

Its subcellular location is the cytoplasm. It carries out the reaction 1-(5-phospho-beta-D-ribosyl)-5-[(5-phospho-beta-D-ribosylamino)methylideneamino]imidazole-4-carboxamide = 5-[(5-phospho-1-deoxy-D-ribulos-1-ylimino)methylamino]-1-(5-phospho-beta-D-ribosyl)imidazole-4-carboxamide. It functions in the pathway amino-acid biosynthesis; L-histidine biosynthesis; L-histidine from 5-phospho-alpha-D-ribose 1-diphosphate: step 4/9. The chain is 1-(5-phosphoribosyl)-5-[(5-phosphoribosylamino)methylideneamino] imidazole-4-carboxamide isomerase from Teredinibacter turnerae (strain ATCC 39867 / T7901).